Reading from the N-terminus, the 120-residue chain is A-type ATP synthase subunit F (120 aa).

This sequence belongs to the V-ATPase F subunit family. As to quaternary structure, has multiple subunits with at least A(3), B(3), C, D, E, F, H, I and proteolipid K(x).

It localises to the cell membrane. Component of the A-type ATP synthase that produces ATP from ADP in the presence of a proton gradient across the membrane. This is A-type ATP synthase subunit F from Halobacterium salinarum (strain ATCC 29341 / DSM 671 / R1).